The chain runs to 287 residues: mRNA-capping enzyme small subunit (287 aa).

As to quaternary structure, heterodimer of a large and a small subunit.

The protein resides in the virion. The enzyme catalyses a 5'-end (5'-triphosphoguanosine)-ribonucleoside in mRNA + S-adenosyl-L-methionine = a 5'-end (N(7)-methyl 5'-triphosphoguanosine)-ribonucleoside in mRNA + S-adenosyl-L-homocysteine. In terms of biological role, catalyzes the last reaction in the mRNA cap formation pathway. In Sus scrofa (Pig), this protein is mRNA-capping enzyme small subunit.